The chain runs to 129 residues: Iron-sulfur cluster assembly 1 homolog, mitochondrial (129 aa).

A mitochondrion-targeting transit peptide spans 1 to 12; the sequence is MSASLVRATVRA. Fe cation contacts are provided by C57, C121, and C123.

It belongs to the HesB/IscA family. In terms of assembly, interacts with CRY2, but not with CRY1 (in vitro).

It is found in the mitochondrion. In terms of biological role, involved in the maturation of mitochondrial 4Fe-4S proteins functioning late in the iron-sulfur cluster assembly pathway. Probably involved in the binding of an intermediate of Fe/S cluster assembly. This is Iron-sulfur cluster assembly 1 homolog, mitochondrial (Isca1) from Mus musculus (Mouse).